Consider the following 76-residue polypeptide: RNA-binding protein KhpA (76 aa).

In terms of domain architecture, KH spans 30-76; it reads GEVLEVRVNPEDLGRVIGRSGRTAKALRTLVTALADGRRVRVDVVDD.

Belongs to the KhpA RNA-binding protein family.

It is found in the cytoplasm. Functionally, a probable RNA-binding protein. This is RNA-binding protein KhpA from Leifsonia xyli subsp. xyli (strain CTCB07).